The sequence spans 138 residues: Cellular retinoic acid-binding protein 2 (138 aa).

The Nuclear localization signal signature appears at lysine 21–lysine 31. Lysine 102 is covalently cross-linked (Glycyl lysine isopeptide (Lys-Gly) (interchain with G-Cter in SUMO)). Arginine 133–tyrosine 135 lines the all-trans-retinoate pocket.

Belongs to the calycin superfamily. Fatty-acid binding protein (FABP) family. As to quaternary structure, interacts with importin alpha, RXR and RARA. Post-translationally, sumoylated in response to retinoic acid binding, sumoylation is critical for dissociation from ER and subsequent nuclear translocation.

Its subcellular location is the cytoplasm. It localises to the endoplasmic reticulum. The protein localises to the nucleus. Transports retinoic acid to the nucleus. Regulates the access of retinoic acid to the nuclear retinoic acid receptors. This is Cellular retinoic acid-binding protein 2 (CRABP2) from Bos taurus (Bovine).